A 63-amino-acid polypeptide reads, in one-letter code: Large ribosomal subunit protein uL29 (63 aa).

It belongs to the universal ribosomal protein uL29 family.

This is Large ribosomal subunit protein uL29 from Flavobacterium psychrophilum (strain ATCC 49511 / DSM 21280 / CIP 103535 / JIP02/86).